Consider the following 81-residue polypeptide: Metallocarboxypeptidase inhibitor (81 aa).

The first 15 residues, 1-15 (MFLLVFLCCLHLVIS), serve as a signal peptide directing secretion. 4 cysteine pairs are disulfide-bonded: cysteine 25/cysteine 48, cysteine 32/cysteine 76, cysteine 33/cysteine 57, and cysteine 36/cysteine 72.

Its function is as follows. Tightly binding, competitive inhibitor of different types of pancreatic-like carboxypeptidases. Inhibits human CPA4. The chain is Metallocarboxypeptidase inhibitor from Hirudo medicinalis (Medicinal leech).